The sequence spans 611 residues: MNKVGFFRSIQFKITLIYVLLIIIAMQIIGVYFVNQVEKSLISSYEQSLNQRIDNLSYYIEQEYKSDNDSTVIKDDVSRILNDFTKSDEVREISFVDKSYEVVGSSKPYGEEVAGKQTTDLIFKRIFSTKQSYLRKYYDPKSKIRVLISAKPVMTENQEVVGAIYVVASMEDVFNQMKTINTILASGTGLALVLTALLGIFLARTITHPLSDMRKQAMELAKGNFSRKVKKYGHDEIGQLATTFNHLTRELEDAQAMTEGERRKLASVIAYMTDGVIATNRNGAIILLNSPALELLNVSRETALEMPITSLLGLQENYTFEDLVEQQDSMLLEIERDDELTVLRVNFSVIQREHGKIDGLIAVIYDVTEQEKMDQERREFVANVSHELRTPLTTMRSYLEALAEGAWENKDIAPRFLMVTQNETERMIRLVNDLLQLSKFDSKDYQFNREWIQIVRFMSLIIDRFEMTKEQHVEFIRNLPDRDLYVEIDQDKITQVLDNIISNALKYSPEGGHVTFSIDVNEEEELLYISVKDEGIGIPKKDVEKVFDRFYRVDKARTRKLGGTGLGLAIAKEMVQAHGGDIWADSIEGKGTTITFTLPYKEEQEDDWDEA.

Over 1–13 (MNKVGFFRSIQFK) the chain is Cytoplasmic. A helical transmembrane segment spans residues 14–34 (ITLIYVLLIIIAMQIIGVYFV). Residues 35–182 (NQVEKSLISS…VFNQMKTINT (148 aa)) lie on the Extracellular side of the membrane. The chain crosses the membrane as a helical span at residues 183 to 203 (ILASGTGLALVLTALLGIFLA). The HAMP domain maps to 204 to 256 (RTITHPLSDMRKQAMELAKGNFSRKVKKYGHDEIGQLATTFNHLTRELEDAQA). Residues 204–611 (RTITHPLSDM…EEQEDDWDEA (408 aa)) are Cytoplasmic-facing. The 62-residue stretch at 263–324 (RKLASVIAYM…QENYTFEDLV (62 aa)) folds into the PAS domain. In terms of domain architecture, PAC spans 325-379 (EQQDSMLLEIERDDELTVLRVNFSVIQREHGKIDGLIAVIYDVTEQEKMDQERRE). The Histidine kinase domain occupies 383–602 (NVSHELRTPL…TITFTLPYKE (220 aa)). A Phosphohistidine; by autocatalysis modification is found at histidine 386.

In terms of assembly, homodimer. Interacts with YycH and YycI. Autophosphorylated.

The protein resides in the cell membrane. The catalysed reaction is ATP + protein L-histidine = ADP + protein N-phospho-L-histidine.. In terms of biological role, member of the two-component regulatory system WalK/WalR involved in the regulation of the ftsAZ operon, the yocH and ykvT, cwlO, lytE, ydjM, yjeA, yoeB genes and the tagAB and tagDEF operons. Phosphorylates WalR. This chain is Sensor histidine kinase WalK, found in Bacillus subtilis (strain 168).